The primary structure comprises 143 residues: Nucleoside diphosphate kinase (143 aa).

ATP is bound by residues Lys11, Phe59, Arg87, Thr93, Arg104, and Asn114. His117 (pros-phosphohistidine intermediate) is an active-site residue.

The protein belongs to the NDK family. In terms of assembly, homotetramer. It depends on Mg(2+) as a cofactor.

The protein localises to the cytoplasm. It catalyses the reaction a 2'-deoxyribonucleoside 5'-diphosphate + ATP = a 2'-deoxyribonucleoside 5'-triphosphate + ADP. The enzyme catalyses a ribonucleoside 5'-diphosphate + ATP = a ribonucleoside 5'-triphosphate + ADP. In terms of biological role, major role in the synthesis of nucleoside triphosphates other than ATP. The ATP gamma phosphate is transferred to the NDP beta phosphate via a ping-pong mechanism, using a phosphorylated active-site intermediate. This chain is Nucleoside diphosphate kinase, found in Shewanella sp. (strain W3-18-1).